The primary structure comprises 85 residues: Phosphocarrier protein HPr (85 aa).

Residues 1–85 (MYSKDVEIIA…HLVALIPTLE (85 aa)) form the HPr domain. His-15 functions as the Pros-phosphohistidine intermediate in the catalytic mechanism.

This sequence belongs to the HPr family.

Its subcellular location is the cytoplasm. Its function is as follows. General (non sugar-specific) component of the phosphoenolpyruvate-dependent sugar phosphotransferase system (sugar PTS). This major carbohydrate active-transport system catalyzes the phosphorylation of incoming sugar substrates concomitantly with their translocation across the cell membrane. The phosphoryl group from phosphoenolpyruvate (PEP) is transferred to the phosphoryl carrier protein HPr by enzyme I. Phospho-HPr then transfers it to the PTS EIIA domain. This chain is Phosphocarrier protein HPr (ptsH), found in Haemophilus influenzae (strain ATCC 51907 / DSM 11121 / KW20 / Rd).